A 382-amino-acid polypeptide reads, in one-letter code: Homeobox protein SHOOT MERISTEMLESS (382 aa).

The interval 26 to 59 (MMMMMPPIMTSHQHHGHDHQHQQQEHDGYAYQSH) is disordered. Positions 44-53 (HQHQQQEHDG) are enriched in basic and acidic residues. The region spanning 262–282 (ELKGQLLRKYSGYLGSLKQEF) is the ELK domain. A DNA-binding region (homeobox; TALE-type) is located at residues 283 to 346 (MKKRKKGKLP…NQRKRHWKPS (64 aa)).

This sequence belongs to the TALE/KNOX homeobox family. In terms of assembly, forms homodimers. May form heterodimeric complexes with TALE/BELL proteins BEL1, BLH2, BLH3, BLH8/PNF, BLH9/PNY and ATH1. Interacts with CCT8. Binds to MBP2C; this interaction reduces RNA binding capacity. Interacts with FTIP3 and FTIP4. In terms of tissue distribution, expressed in all four types of shoot apical meristems (SAM) i.e. in vegetative, axillary, inflorescence and floral.

It localises to the nucleus. Its subcellular location is the cell junction. The protein localises to the plasmodesma. It is found in the cytoplasm. The protein resides in the endosome. It localises to the cell membrane. In terms of biological role, required for shoot apical meristem (SAM) formation during embryogenesis. Negatively regulates ASYMMETRIC LEAVES1 (AS1) and ASYMMETRIC LEAVES2 (AS2 or LBD6). Probably binds to the DNA sequence 5'-TGAC-3'. Binds to RNA. The protein is Homeobox protein SHOOT MERISTEMLESS of Arabidopsis thaliana (Mouse-ear cress).